The following is a 262-amino-acid chain: Undecaprenyl-diphosphatase (262 aa).

Transmembrane regions (helical) follow at residues 15-35 (LTEW…IILL), 38-58 (SSAA…IVAF), 91-111 (LYIL…AKYV), 114-134 (IFGS…LLYS), 149-169 (ALIV…RSGA), 189-209 (FLLS…VSPA), 219-239 (VGLL…LSII), and 242-262 (GRLH…LSLL).

The protein belongs to the UppP family.

The protein localises to the cell membrane. The enzyme catalyses di-trans,octa-cis-undecaprenyl diphosphate + H2O = di-trans,octa-cis-undecaprenyl phosphate + phosphate + H(+). In terms of biological role, catalyzes the dephosphorylation of undecaprenyl diphosphate (UPP). The sequence is that of Undecaprenyl-diphosphatase from Korarchaeum cryptofilum (strain OPF8).